We begin with the raw amino-acid sequence, 471 residues long: Abscisic acid 8'-hydroxylase 1 (471 aa).

Residues 1 to 21 (MGAFLLFVCVLAPFLLVCAVR) traverse the membrane as a helical segment. A heme-binding site is contributed by Cys-415.

Belongs to the cytochrome P450 family. It depends on heme as a cofactor. In seedlings and expanding leaves.

It localises to the membrane. It catalyses the reaction 2-cis-(+)-abscisate + reduced [NADPH--hemoprotein reductase] + O2 = (+)-8'-hydroxyabscisate + oxidized [NADPH--hemoprotein reductase] + H2O + H(+). It functions in the pathway plant hormone degradation; abscisic acid degradation. In terms of biological role, involved in the oxidative degradation of abscisic acid. In Oryza sativa subsp. indica (Rice), this protein is Abscisic acid 8'-hydroxylase 1 (CYP707A5).